A 735-amino-acid chain; its full sequence is Photosystem I P700 chlorophyll a apoprotein A2 (735 aa).

The next 8 helical transmembrane spans lie at Ile47–Ala70, Leu136–Gln159, Leu176–Ile200, Met274–Tyr292, Leu331–Tyr354, Ala370–Ile396, Ala418–His440, and Phe518–Val536. Positions 560 and 569 each coordinate [4Fe-4S] cluster. A run of 2 helical transmembrane segments spans residues Ala576–Trp597 and Leu644–Ile666. Residues His655, Met663, and Tyr671 each coordinate chlorophyll a. Trp672 is a phylloquinone binding site. The chain crosses the membrane as a helical span at residues Leu708–Ala728.

Belongs to the PsaA/PsaB family. As to quaternary structure, the PsaA/B heterodimer binds the P700 chlorophyll special pair and subsequent electron acceptors. PSI consists of a core antenna complex that captures photons, and an electron transfer chain that converts photonic excitation into a charge separation. The eukaryotic PSI reaction center is composed of at least 11 subunits. P700 is a chlorophyll a/chlorophyll a' dimer, A0 is one or more chlorophyll a, A1 is one or both phylloquinones and FX is a shared 4Fe-4S iron-sulfur center. serves as cofactor.

It is found in the plastid. It localises to the chloroplast thylakoid membrane. The catalysed reaction is reduced [plastocyanin] + hnu + oxidized [2Fe-2S]-[ferredoxin] = oxidized [plastocyanin] + reduced [2Fe-2S]-[ferredoxin]. In terms of biological role, psaA and PsaB bind P700, the primary electron donor of photosystem I (PSI), as well as the electron acceptors A0, A1 and FX. PSI is a plastocyanin/cytochrome c6-ferredoxin oxidoreductase, converting photonic excitation into a charge separation, which transfers an electron from the donor P700 chlorophyll pair to the spectroscopically characterized acceptors A0, A1, FX, FA and FB in turn. Oxidized P700 is reduced on the lumenal side of the thylakoid membrane by plastocyanin or cytochrome c6. The sequence is that of Photosystem I P700 chlorophyll a apoprotein A2 from Stigeoclonium helveticum (Green alga).